The chain runs to 100 residues: Small ribosomal subunit protein uS14c (100 aa).

This sequence belongs to the universal ribosomal protein uS14 family. In terms of assembly, part of the 30S ribosomal subunit.

It is found in the plastid. It localises to the chloroplast. Its function is as follows. Binds 16S rRNA, required for the assembly of 30S particles. The polypeptide is Small ribosomal subunit protein uS14c (Phaeodactylum tricornutum (strain CCAP 1055/1)).